The following is a 186-amino-acid chain: Ribosome-recycling factor (186 aa).

It belongs to the RRF family.

Its subcellular location is the cytoplasm. In terms of biological role, responsible for the release of ribosomes from messenger RNA at the termination of protein biosynthesis. May increase the efficiency of translation by recycling ribosomes from one round of translation to another. In Burkholderia ambifaria (strain ATCC BAA-244 / DSM 16087 / CCUG 44356 / LMG 19182 / AMMD) (Burkholderia cepacia (strain AMMD)), this protein is Ribosome-recycling factor.